Reading from the N-terminus, the 741-residue chain is Polyribonucleotide nucleotidyltransferase (741 aa).

Mg(2+) contacts are provided by aspartate 489 and aspartate 495. Residues 556 to 615 (PKIDSIQIPVDKIKVVIGKGGETIDKIIAETGVTIDIDEEGLVQIFSSDQDAIDRAKTII) form the KH domain. In terms of domain architecture, S1 motif spans 625–693 (GEVYTVPVVR…EKGRVDASIK (69 aa)). Residues 695–741 (LLPKPEKNEDGENGEEHRHCCCSHHKPDHHNESVEAPKKSDESETKE) form a disordered region. 2 stretches are compositionally biased toward basic and acidic residues: residues 698–713 (KPEKNEDGENGEEHRH) and 723–741 (HHNESVEAPKKSDESETKE).

Belongs to the polyribonucleotide nucleotidyltransferase family. Mg(2+) is required as a cofactor.

It localises to the cytoplasm. The catalysed reaction is RNA(n+1) + phosphate = RNA(n) + a ribonucleoside 5'-diphosphate. Functionally, involved in mRNA degradation. Catalyzes the phosphorolysis of single-stranded polyribonucleotides processively in the 3'- to 5'-direction. This Streptococcus thermophilus (strain CNRZ 1066) protein is Polyribonucleotide nucleotidyltransferase.